Reading from the N-terminus, the 289-residue chain is 4-diphosphocytidyl-2-C-methyl-D-erythritol kinase (289 aa).

The active site involves Lys-10. 94–104 (PVAAGLAGGSS) is a binding site for ATP. Asp-136 is a catalytic residue.

This sequence belongs to the GHMP kinase family. IspE subfamily.

The catalysed reaction is 4-CDP-2-C-methyl-D-erythritol + ATP = 4-CDP-2-C-methyl-D-erythritol 2-phosphate + ADP + H(+). Its pathway is isoprenoid biosynthesis; isopentenyl diphosphate biosynthesis via DXP pathway; isopentenyl diphosphate from 1-deoxy-D-xylulose 5-phosphate: step 3/6. Catalyzes the phosphorylation of the position 2 hydroxy group of 4-diphosphocytidyl-2C-methyl-D-erythritol. The protein is 4-diphosphocytidyl-2-C-methyl-D-erythritol kinase of Bacillus licheniformis (strain ATCC 14580 / DSM 13 / JCM 2505 / CCUG 7422 / NBRC 12200 / NCIMB 9375 / NCTC 10341 / NRRL NRS-1264 / Gibson 46).